Reading from the N-terminus, the 99-residue chain is Translation initiation factor 1A (99 aa).

An S1-like domain is found at 11–84 (RRVRTPRRGE…EKADIVWRYT (74 aa)).

This sequence belongs to the eIF-1A family.

Seems to be required for maximal rate of protein biosynthesis. Enhances ribosome dissociation into subunits and stabilizes the binding of the initiator Met-tRNA(I) to 40 S ribosomal subunits. In Methanothermobacter thermautotrophicus (strain ATCC 29096 / DSM 1053 / JCM 10044 / NBRC 100330 / Delta H) (Methanobacterium thermoautotrophicum), this protein is Translation initiation factor 1A (eIF1A).